Here is a 116-residue protein sequence, read N- to C-terminus: Host cell factor C1 regulator 1 (116 aa).

The interval 1–22 is disordered; sequence MILQQPLERGPPGRDPRATTGV. The tract at residues 54 to 57 is interaction with HCFC1; sequence DHPY. Positions 88–97 match the Nuclear export signal motif; it reads IPEALRLLRL.

As to quaternary structure, interacts with HCFC1.

Its subcellular location is the cytoplasm. The protein localises to the nucleus. In terms of biological role, regulates HCFC1 activity by modulating its subcellular localization. Overexpression of HCFC1R1 leads to accumulation of HCFC1 in the cytoplasm. HCFC1R1-mediated export may provide the pool of cytoplasmic HCFC1 required for import of virion-derived VP16 into the nucleus. This Rattus norvegicus (Rat) protein is Host cell factor C1 regulator 1 (Hcfc1r1).